Reading from the N-terminus, the 395-residue chain is Axin-like protein 1 (395 aa).

In terms of domain architecture, RGS spans 4–132 (RSKTFSDRIL…TTTADVSNTW (129 aa)). A disordered region spans residues 190 to 230 (QETKNSSETEEEKKKERSADPYGSDGFAPPPQSTQTHTLRN). A compositionally biased stretch (basic and acidic residues) spans 194–208 (NSSETEEEKKKERSA). The region spanning 301–386 (EIQKLTVELR…RITAICRMCP (86 aa)) is the DIX domain.

In terms of assembly, interacts with bar-1, dsh-2, gsk-3, and mig-5.

Its function is as follows. Works in parallel with pry-1 in negatively regulating bar-1 signaling in vulval precursor cells and Q neuroblasts. Shown to have a role in excretory cell development. This chain is Axin-like protein 1 (axl-1), found in Caenorhabditis briggsae.